The following is a 509-amino-acid chain: Transcription factor SOX-9 (509 aa).

Disordered regions lie at residues 1–67 and 160–273; these read MNLL…SEED and RLRV…FRDV. The segment covering 30–41 has biased composition (low complexity); it reads SAGSPCPSGSGS. Positions 42–52 are enriched in polar residues; sequence DTENTRPQENT. Basic and acidic residues-rich tracts occupy residues 56 to 67 and 160 to 174; these read GEPDLKKESEED and RLRVQHKKDHPDYKY. A dimerization (DIM) region spans residues 63 to 103; that stretch reads ESEEDKFPVCIREAVSQVLKGYDWTLVPMPVRVNGSSKNKP. A PQA region spans residues 63-103; sequence ESEEDKFPVCIREAVSQVLKGYDWTLVPMPVRVNGSSKNKP. Ser64 is modified (phosphoserine). A DNA-binding region (HMG box) is located at residues 105–173; it reads VKRPMNAFMV…QHKKDHPDYK (69 aa). Phosphoserine is present on Ser211. Positions 224-307 are transactivation domain (TAM); it reads PGEHSGQSQG…LPPNGHPGVP (84 aa). Short sequence motifs (9aaTAD) lie at residues 275-284 and 290-298; these read IGELSSDVIS and DVNEFDQYL. A disordered region spans residues 330–415; the sequence is SAGHVWMSKQ…HYSEQQQHSP (86 aa). Over residues 341–376 the composition is skewed to pro residues; sequence APPPPPQQPPQAPPAPQAPPQPQAAPPQQPAAPPQQ. Over residues 380 to 415 the composition is skewed to polar residues; that stretch reads HTLTTLSSEPGQSQRTHIKTEQLSPSHYSEQQQHSP. A transactivation domain (TAC) region spans residues 394-509; sequence RTHIKTEQLS…QPVYTQLTRP (116 aa). Residue Lys398 forms a Glycyl lysine isopeptide (Lys-Gly) (interchain with G-Cter in ubiquitin) linkage. A 9aaTAD 3 motif is present at residues 460-468; that stretch reads TGLYSTFTY. The segment at 479-509 is disordered; the sequence is PIADTSGVPSIPQTHSPQHWEQPVYTQLTRP. The segment covering 485–509 has biased composition (polar residues); that stretch reads GVPSIPQTHSPQHWEQPVYTQLTRP.

Homodimer; homodimerization is required for activity. Interacts (via C-terminus) with ZNF219; forming a complex that binds to the COL2A1 promoter and activates COL2A1 expression. Interacts with DDRGK1. Interacts with EP300/p300. Interacts with beta-catenin (CTNNB1); inhibiting CTNNB1 activity by competing with the binding sites of TCF/LEF within CTNNB1. Acetylated; acetylation impairs nuclear localization and ability to transactivate expression of target genes. Deacetylated by SIRT1. Post-translationally, phosphorylation at Ser-64 and Ser-211 by PKA increases transcriptional activity and may help delay chondrocyte maturation downstream of PTHLH/PTHrP signaling. Phosphorylation at either Ser-64 or Ser-211 is required for sumoylation, but phosphorylation is not dependent on sumoylation. Phosphorylated on tyrosine residues; tyrosine dephosphorylation by PTPN11/SHP2 blocks SOX9 phosphorylation by PKA and subsequent SUMOylation. In terms of processing, ubiquitinated; ubiquitination leads to proteasomal degradation and is negatively regulated by DDRGK1. Sumoylated; phosphorylation at either Ser-64 or Ser-211 is required for sumoylation. Sumoylation is induced by BMP signaling pathway.

Its subcellular location is the nucleus. Its function is as follows. Transcription factor that plays a key role in chondrocytes differentiation and skeletal development. Specifically binds the 5'-ACAAAG-3' DNA motif present in enhancers and super-enhancers and promotes expression of genes important for chondrogenesis, including cartilage matrix protein-coding genes COL2A1, COL4A2, COL9A1, COL11A2 and ACAN, SOX5 and SOX6. Also binds to some promoter regions. Plays a central role in successive steps of chondrocyte differentiation. Absolutely required for precartilaginous condensation, the first step in chondrogenesis during which skeletal progenitors differentiate into prechondrocytes. Together with SOX5 and SOX6, required for overt chondrogenesis when condensed prechondrocytes differentiate into early stage chondrocytes, the second step in chondrogenesis. Later, required to direct hypertrophic maturation and block osteoblast differentiation of growth plate chondrocytes: maintains chondrocyte columnar proliferation, delays prehypertrophy and then prevents osteoblastic differentiation of chondrocytes by lowering beta-catenin (CTNNB1) signaling and RUNX2 expression. Also required for chondrocyte hypertrophy, both indirectly, by keeping the lineage fate of chondrocytes, and directly, by remaining present in upper hypertrophic cells and transactivating COL10A1 along with MEF2C. Low lipid levels are the main nutritional determinant for chondrogenic commitment of skeletal progenitor cells: when lipids levels are low, FOXO (FOXO1 and FOXO3) transcription factors promote expression of SOX9, which induces chondrogenic commitment and suppresses fatty acid oxidation. Mechanistically, helps, but is not required, to remove epigenetic signatures of transcriptional repression and deposit active promoter and enhancer marks at chondrocyte-specific genes. Acts in cooperation with the Hedgehog pathway-dependent GLI (GLI1 and GLI3) transcription factors. In addition to cartilage development, also acts as a regulator of proliferation and differentiation in epithelial stem/progenitor cells: involved in the lung epithelium during branching morphogenesis, by balancing proliferation and differentiation and regulating the extracellular matrix. Controls epithelial branching during kidney development. The sequence is that of Transcription factor SOX-9 from Homo sapiens (Human).